Here is a 467-residue protein sequence, read N- to C-terminus: 2-succinylbenzoate--CoA ligase (467 aa).

The protein belongs to the ATP-dependent AMP-binding enzyme family. MenE subfamily.

The enzyme catalyses 2-succinylbenzoate + ATP + CoA = 2-succinylbenzoyl-CoA + AMP + diphosphate. It functions in the pathway quinol/quinone metabolism; 1,4-dihydroxy-2-naphthoate biosynthesis; 1,4-dihydroxy-2-naphthoate from chorismate: step 5/7. Its pathway is quinol/quinone metabolism; menaquinone biosynthesis. Converts 2-succinylbenzoate (OSB) to 2-succinylbenzoyl-CoA (OSB-CoA). This Listeria innocua serovar 6a (strain ATCC BAA-680 / CLIP 11262) protein is 2-succinylbenzoate--CoA ligase.